The following is a 154-amino-acid chain: Probable chemoreceptor glutamine deamidase CheD (154 aa).

Belongs to the CheD family.

The catalysed reaction is L-glutaminyl-[protein] + H2O = L-glutamyl-[protein] + NH4(+). Functionally, probably deamidates glutamine residues to glutamate on methyl-accepting chemotaxis receptors (MCPs), playing an important role in chemotaxis. The polypeptide is Probable chemoreceptor glutamine deamidase CheD (Methanococcus vannielii (strain ATCC 35089 / DSM 1224 / JCM 13029 / OCM 148 / SB)).